The chain runs to 272 residues: Proteasome subunit beta (272 aa).

The propeptide at 1 to 47 (MSTGGDRLPEAFLRPGSSSFVEFLREVAPQSHPEHARPAGAGDVVHA) is removed in mature form; by autocatalysis. Threonine 48 functions as the Nucleophile in the catalytic mechanism.

It belongs to the peptidase T1B family. In terms of assembly, the 20S proteasome core is composed of 14 alpha and 14 beta subunits that assemble into four stacked heptameric rings, resulting in a barrel-shaped structure. The two inner rings, each composed of seven catalytic beta subunits, are sandwiched by two outer rings, each composed of seven alpha subunits. The catalytic chamber with the active sites is on the inside of the barrel. Has a gated structure, the ends of the cylinder being occluded by the N-termini of the alpha-subunits. Is capped by the proteasome-associated ATPase, ARC.

The protein resides in the cytoplasm. The enzyme catalyses Cleavage of peptide bonds with very broad specificity.. It functions in the pathway protein degradation; proteasomal Pup-dependent pathway. The formation of the proteasomal ATPase ARC-20S proteasome complex, likely via the docking of the C-termini of ARC into the intersubunit pockets in the alpha-rings, may trigger opening of the gate for substrate entry. Interconversion between the open-gate and close-gate conformations leads to a dynamic regulation of the 20S proteasome proteolysis activity. Functionally, component of the proteasome core, a large protease complex with broad specificity involved in protein degradation. In Beutenbergia cavernae (strain ATCC BAA-8 / DSM 12333 / CCUG 43141 / JCM 11478 / NBRC 16432 / NCIMB 13614 / HKI 0122), this protein is Proteasome subunit beta.